Reading from the N-terminus, the 539-residue chain is Putative cysteine ligase BshC (539 aa).

Residues 249-270 adopt a coiled-coil conformation; the sequence is VETNDEVTNRLNESQAAMKRAG.

This sequence belongs to the BshC family.

Its function is as follows. Involved in bacillithiol (BSH) biosynthesis. May catalyze the last step of the pathway, the addition of cysteine to glucosamine malate (GlcN-Mal) to generate BSH. The protein is Putative cysteine ligase BshC of Bacillus pumilus (strain SAFR-032).